A 190-amino-acid polypeptide reads, in one-letter code: Potassium-transporting ATPase KdpC subunit (190 aa).

Residues L15 to F35 traverse the membrane as a helical segment.

This sequence belongs to the KdpC family. The system is composed of three essential subunits: KdpA, KdpB and KdpC.

It is found in the cell inner membrane. In terms of biological role, part of the high-affinity ATP-driven potassium transport (or Kdp) system, which catalyzes the hydrolysis of ATP coupled with the electrogenic transport of potassium into the cytoplasm. This subunit acts as a catalytic chaperone that increases the ATP-binding affinity of the ATP-hydrolyzing subunit KdpB by the formation of a transient KdpB/KdpC/ATP ternary complex. This chain is Potassium-transporting ATPase KdpC subunit, found in Synechocystis sp. (strain ATCC 27184 / PCC 6803 / Kazusa).